The chain runs to 827 residues: Zinc phosphodiesterase ELAC protein 2 (827 aa).

A mitochondrion-targeting transit peptide spans 1 to 16; the sequence is MWALRSLLRPLGLRTM. Disordered regions lie at residues 15–46 and 181–220; these read TMSQ…GWGP and SERR…QCLP. Residues 181–192 show a composition bias toward basic and acidic residues; that stretch reads SERRCGEQEPSR. Phosphoserine is present on residues S193, S197, S202, S207, S617, and S735. A compositionally biased stretch (polar residues) spans 199-210; that stretch reads NRLSPKQSSSDP. The tract at residues 794–827 is disordered; that stretch reads LTQQADSSEDREPHQKRAHSEEPHSPQSKKVRAQ. T795 carries the post-translational modification Phosphothreonine. S800 is modified (phosphoserine). Basic and acidic residues predominate over residues 801–817; it reads SEDREPHQKRAHSEEPH. S818 carries the post-translational modification Phosphoserine.

Belongs to the RNase Z family. As to quaternary structure, homodimer. Interacts with PTCD1. Zn(2+) is required as a cofactor.

It localises to the mitochondrion. The protein resides in the mitochondrion matrix. It is found in the mitochondrion nucleoid. The protein localises to the nucleus. The catalysed reaction is Endonucleolytic cleavage of RNA, removing extra 3' nucleotides from tRNA precursor, generating 3' termini of tRNAs. A 3'-hydroxy group is left at the tRNA terminus and a 5'-phosphoryl group is left at the trailer molecule.. Its function is as follows. Zinc phosphodiesterase, which displays mitochondrial tRNA 3'-processing endonuclease activity. Involved in tRNA maturation, by removing a 3'-trailer from precursor tRNA. Associates with mitochondrial DNA complexes at the nucleoids to initiate RNA processing and ribosome assembly. The sequence is that of Zinc phosphodiesterase ELAC protein 2 (Elac2) from Rattus norvegicus (Rat).